Here is an 884-residue protein sequence, read N- to C-terminus: Valine--tRNA ligase (884 aa).

Residues 47–57 carry the 'HIGH' region motif; sequence PNVTGALHIGH. Positions 525–529 match the 'KMSKS' region motif; it reads KMSKS. Position 528 (Lys528) interacts with ATP. A coiled-coil region spans residues 812–884; the sequence is AVDFEAELAR…QQRFRDAIGK (73 aa).

It belongs to the class-I aminoacyl-tRNA synthetase family. ValS type 1 subfamily. In terms of assembly, monomer.

Its subcellular location is the cytoplasm. The catalysed reaction is tRNA(Val) + L-valine + ATP = L-valyl-tRNA(Val) + AMP + diphosphate. Its function is as follows. Catalyzes the attachment of valine to tRNA(Val). As ValRS can inadvertently accommodate and process structurally similar amino acids such as threonine, to avoid such errors, it has a 'posttransfer' editing activity that hydrolyzes mischarged Thr-tRNA(Val) in a tRNA-dependent manner. This Nitratidesulfovibrio vulgaris (strain ATCC 29579 / DSM 644 / CCUG 34227 / NCIMB 8303 / VKM B-1760 / Hildenborough) (Desulfovibrio vulgaris) protein is Valine--tRNA ligase.